The primary structure comprises 697 residues: Probable potassium transporter 4 (697 aa).

At 1-29 (MSSSHTVTVSMDVEAGQKNKDKKGISQDL) the chain is on the cytoplasmic side. The helical transmembrane segment at 30–50 (ILAYKTLGVVFGGLVTSPLYV) threads the bilayer. Residues 51 to 66 (YPSMNLTNPTEEDYLG) lie on the Extracellular side of the membrane. N-linked (GlcNAc...) asparagine glycosylation occurs at asparagine 55. A helical transmembrane segment spans residues 67–87 (IYSIMFWTLTLIGVVKYICIA). Topologically, residues 88–152 (LNADDHGEGG…FIESSIIARR (65 aa)) are cytoplasmic. Residues 153–173 (LLLLTAILGMCMLIGDGILTP) traverse the membrane as a helical segment. At 174 to 189 (AISVLSAIDGLRGPFP) the chain is on the extracellular side. A helical transmembrane segment spans residues 190–210 (SVSKPAVEGLSAAILVGLFLL). Residues 211 to 217 (QKYGTSK) lie on the Cytoplasmic side of the membrane. The helical transmembrane segment at 218–238 (VSFMFSPIMAAWTFATPVIGV) threads the bilayer. At 239 to 271 (YSIWRYYPGIFKAMSPHYIVRFFMTNQTRGWQL) the chain is on the extracellular side. N-linked (GlcNAc...) asparagine glycosylation occurs at asparagine 264. The helical transmembrane segment at 272–292 (LGGTVLCITGAEAMFADLGHF) threads the bilayer. At 293-300 (SKRSIQIA) the chain is on the cytoplasmic side. A helical transmembrane segment spans residues 301–321 (FMSSIYPSLVLTYAGQTAYLI). Over 322–338 (NNVDDFSDGFYKFVPRP) the chain is Extracellular. A helical membrane pass occupies residues 339–359 (VYWPMFIIATLAAIVASQSLI). Over 360 to 390 (SATFSVIKQSVVLDYFPRVKVVHTSKDKEGE) the chain is Cytoplasmic. A helical transmembrane segment spans residues 391–411 (VYSPETNYMLMLLCVGVILGF). Over 412-422 (GDGKDIGNAFG) the chain is Extracellular. The chain crosses the membrane as a helical span at residues 423 to 443 (VVVILVMLITTILLTLVMLII). Topologically, residues 444-447 (WGTH) are cytoplasmic. The helical transmembrane segment at 448–468 (VVLVALYLVPFLLLEATYVSA) threads the bilayer. Over 469-475 (VCTKILR) the chain is Extracellular. A helical membrane pass occupies residues 476-496 (GGWVPFAVSVALAAVMFGWYY). Residues 497–697 (GRQRKTEYEA…RVEIGMLYKA (201 aa)) are Cytoplasmic-facing.

It belongs to the HAK/KUP transporter (TC 2.A.72.3) family.

It localises to the membrane. Functionally, high-affinity potassium transporter. The polypeptide is Probable potassium transporter 4 (HAK4) (Oryza sativa subsp. japonica (Rice)).